We begin with the raw amino-acid sequence, 74 residues long: ATP synthase subunit 9, mitochondrial (74 aa).

2 consecutive transmembrane segments (helical) span residues Ile-8–Phe-28 and Ile-50–Ile-70.

Belongs to the ATPase C chain family. F-type ATPases have 2 components, CF(1) - the catalytic core - and CF(0) - the membrane proton channel. CF(1) has five subunits: alpha(3), beta(3), gamma(1), delta(1), epsilon(1). CF(0) has three main subunits: a, b and c.

Its subcellular location is the mitochondrion membrane. This protein is one of the chains of the nonenzymatic membrane component (F0) of mitochondrial ATPase. The protein is ATP synthase subunit 9, mitochondrial (ATP9) of Brassica napus (Rape).